The primary structure comprises 325 residues: NADH-quinone oxidoreductase subunit H (325 aa).

9 helical membrane passes run 11–31 (ILLSILKAVVILLVVVTCGAF), 50–69 (NRVGWGGSLQLVADMIKMFF), 81–101 (VIFTLAPMIAFTSLLLAFAIV), 114–134 (IGILFFLMMAGLAVYAVLFAG), 154–174 (LSYEVFLGLSLMGVVAQAGSF), 186–206 (IWNVIPQFFGFVTFAIAGVAV), 237–257 (FFVGEYIGIVTISALMVTLFF), 265–285 (LPPFIWFALKTAFFMMMFILI), and 304–324 (VCLPLTLINLLVTAAVILWQA).

This sequence belongs to the complex I subunit 1 family. NDH-1 is composed of 13 different subunits. Subunits NuoA, H, J, K, L, M, N constitute the membrane sector of the complex.

The protein localises to the cell inner membrane. The catalysed reaction is a quinone + NADH + 5 H(+)(in) = a quinol + NAD(+) + 4 H(+)(out). In terms of biological role, NDH-1 shuttles electrons from NADH, via FMN and iron-sulfur (Fe-S) centers, to quinones in the respiratory chain. The immediate electron acceptor for the enzyme in this species is believed to be ubiquinone. Couples the redox reaction to proton translocation (for every two electrons transferred, four hydrogen ions are translocated across the cytoplasmic membrane), and thus conserves the redox energy in a proton gradient. This subunit may bind ubiquinone. In Citrobacter koseri (strain ATCC BAA-895 / CDC 4225-83 / SGSC4696), this protein is NADH-quinone oxidoreductase subunit H.